The chain runs to 316 residues: Glycine--tRNA ligase alpha subunit (316 aa).

Belongs to the class-II aminoacyl-tRNA synthetase family. Tetramer of two alpha and two beta subunits.

Its subcellular location is the cytoplasm. The catalysed reaction is tRNA(Gly) + glycine + ATP = glycyl-tRNA(Gly) + AMP + diphosphate. The sequence is that of Glycine--tRNA ligase alpha subunit from Paracoccus denitrificans (strain Pd 1222).